A 291-amino-acid polypeptide reads, in one-letter code: Lipoyl synthase 1 (291 aa).

Residues C34, C39, C45, C60, C64, C67, and S274 each contribute to the [4Fe-4S] cluster site. The 218-residue stretch at F46–L263 folds into the Radical SAM core domain.

The protein belongs to the radical SAM superfamily. Lipoyl synthase family. The cofactor is [4Fe-4S] cluster.

The protein localises to the cytoplasm. The catalysed reaction is [[Fe-S] cluster scaffold protein carrying a second [4Fe-4S](2+) cluster] + N(6)-octanoyl-L-lysyl-[protein] + 2 oxidized [2Fe-2S]-[ferredoxin] + 2 S-adenosyl-L-methionine + 4 H(+) = [[Fe-S] cluster scaffold protein] + N(6)-[(R)-dihydrolipoyl]-L-lysyl-[protein] + 4 Fe(3+) + 2 hydrogen sulfide + 2 5'-deoxyadenosine + 2 L-methionine + 2 reduced [2Fe-2S]-[ferredoxin]. Its pathway is protein modification; protein lipoylation via endogenous pathway; protein N(6)-(lipoyl)lysine from octanoyl-[acyl-carrier-protein]: step 2/2. Functionally, catalyzes the radical-mediated insertion of two sulfur atoms into the C-6 and C-8 positions of the octanoyl moiety bound to the lipoyl domains of lipoate-dependent enzymes, thereby converting the octanoylated domains into lipoylated derivatives. The polypeptide is Lipoyl synthase 1 (Nostoc sp. (strain PCC 7120 / SAG 25.82 / UTEX 2576)).